A 469-amino-acid chain; its full sequence is Citrate synthase, mitochondrial (469 aa).

A mitochondrion-targeting transit peptide spans 1-30 (MSFLSVSRLAPKLLNSKNATYFLVAARNAS). Catalysis depends on residues His304 and His350. Arg359 is a binding site for oxaloacetate. The active site involves Asp405. Arg431 and Arg451 together coordinate oxaloacetate.

Belongs to the citrate synthase family. Homodimer.

The protein resides in the mitochondrion matrix. It carries out the reaction oxaloacetate + acetyl-CoA + H2O = citrate + CoA + H(+). It participates in carbohydrate metabolism; tricarboxylic acid cycle; isocitrate from oxaloacetate: step 1/2. Its function is as follows. Key enzyme of the Krebs tricarboxylic acid cycle which catalyzes the synthesis of citrate from acetyl coenzyme A and oxaloacetate. This chain is Citrate synthase, mitochondrial (cs), found in Katsuwonus pelamis (Skipjack tuna).